Here is a 358-residue protein sequence, read N- to C-terminus: Molybdenum import ATP-binding protein ModC (358 aa).

The 226-residue stretch at 3-228 (INVKQKLGDL…LEMRPWLPAK (226 aa)) folds into the ABC transporter domain. 30–37 (GRSGAGKT) is an ATP binding site. Residues 289-356 (QTSIRNVLLA…IKGVSVTKDD (68 aa)) enclose the Mop domain.

This sequence belongs to the ABC transporter superfamily. Molybdate importer (TC 3.A.1.8) family. In terms of assembly, the complex is composed of two ATP-binding proteins (ModC), two transmembrane proteins (ModB) and a solute-binding protein (ModA).

The protein localises to the cell inner membrane. The enzyme catalyses molybdate(out) + ATP + H2O = molybdate(in) + ADP + phosphate + H(+). In terms of biological role, part of the ABC transporter complex ModABC involved in molybdenum import. Responsible for energy coupling to the transport system. This chain is Molybdenum import ATP-binding protein ModC, found in Photobacterium profundum (strain SS9).